The primary structure comprises 332 residues: Lipoyl synthase (332 aa).

Cysteine 74, cysteine 79, cysteine 85, cysteine 100, cysteine 104, cysteine 107, and serine 314 together coordinate [4Fe-4S] cluster. In terms of domain architecture, Radical SAM core spans cysteine 85–threonine 303.

Belongs to the radical SAM superfamily. Lipoyl synthase family. Requires [4Fe-4S] cluster as cofactor.

The protein localises to the cytoplasm. The catalysed reaction is [[Fe-S] cluster scaffold protein carrying a second [4Fe-4S](2+) cluster] + N(6)-octanoyl-L-lysyl-[protein] + 2 oxidized [2Fe-2S]-[ferredoxin] + 2 S-adenosyl-L-methionine + 4 H(+) = [[Fe-S] cluster scaffold protein] + N(6)-[(R)-dihydrolipoyl]-L-lysyl-[protein] + 4 Fe(3+) + 2 hydrogen sulfide + 2 5'-deoxyadenosine + 2 L-methionine + 2 reduced [2Fe-2S]-[ferredoxin]. Its pathway is protein modification; protein lipoylation via endogenous pathway; protein N(6)-(lipoyl)lysine from octanoyl-[acyl-carrier-protein]: step 2/2. Its function is as follows. Catalyzes the radical-mediated insertion of two sulfur atoms into the C-6 and C-8 positions of the octanoyl moiety bound to the lipoyl domains of lipoate-dependent enzymes, thereby converting the octanoylated domains into lipoylated derivatives. The sequence is that of Lipoyl synthase from Paracidovorax citrulli (strain AAC00-1) (Acidovorax citrulli).